The following is a 126-amino-acid chain: Alpha-lactalbumin (126 aa).

Residues 1–126 (KVFEKCELSQ…CIADLDQWKC (126 aa)) enclose the C-type lysozyme domain. Intrachain disulfides connect cysteine 6–cysteine 126, cysteine 30–cysteine 117, cysteine 63–cysteine 82, and cysteine 78–cysteine 96. N-linked (GlcNAc...) asparagine glycosylation occurs at asparagine 47. Positions 84, 87, 89, 92, and 93 each coordinate Ca(2+).

This sequence belongs to the glycosyl hydrolase 22 family. Lactose synthase (LS) is a heterodimer of a catalytic component, beta1,4-galactosyltransferase (beta4Gal-T1) and a regulatory component, alpha-lactalbumin (LA). As to expression, mammary gland specific. Secreted in milk.

It is found in the secreted. Functionally, regulatory subunit of lactose synthase, changes the substrate specificity of galactosyltransferase in the mammary gland making glucose a good acceptor substrate for this enzyme. This enables LS to synthesize lactose, the major carbohydrate component of milk. In other tissues, galactosyltransferase transfers galactose onto the N-acetylglucosamine of the oligosaccharide chains in glycoproteins. The protein is Alpha-lactalbumin (LALBA) of Tachyglossus aculeatus aculeatus (Southeast Australian short-beaked echidna).